An 870-amino-acid chain; its full sequence is DNA topoisomerase 1 (870 aa).

In terms of domain architecture, Toprim spans 1-128 (MKSPRFRHSQ…RVYKSSFEAA (128 aa)). A Topo IA-type catalytic domain is found at 143–578 (YDGLAYSAKA…QTNAFVQKIT (436 aa)). The interval 180–185 (SSGRVQ) is interaction with DNA. Tyr299 acts as the O-(5'-phospho-DNA)-tyrosine intermediate in catalysis. C4-type zinc fingers lie at residues 603 to 627 (CQCPCGNGIILDRGKFFGCSNHPNC), 693 to 717 (CPKCQKGKILNRKTFFGCSEYQNGC), and 784 to 807 (CPLCQSRVIIGKTNYLCEQYKRGC).

Belongs to the type IA topoisomerase family. Monomer.

It catalyses the reaction ATP-independent breakage of single-stranded DNA, followed by passage and rejoining.. In terms of biological role, releases the supercoiling and torsional tension of DNA, which is introduced during the DNA replication and transcription, by transiently cleaving and rejoining one strand of the DNA duplex. Introduces a single-strand break via transesterification at a target site in duplex DNA. The scissile phosphodiester is attacked by the catalytic tyrosine of the enzyme, resulting in the formation of a DNA-(5'-phosphotyrosyl)-enzyme intermediate and the expulsion of a 3'-OH DNA strand. The free DNA strand then undergoes passage around the unbroken strand, thus removing DNA supercoils. Finally, in the religation step, the DNA 3'-OH attacks the covalent intermediate to expel the active-site tyrosine and restore the DNA phosphodiester backbone. This Bacillus anthracis protein is DNA topoisomerase 1 (topX).